A 210-amino-acid chain; its full sequence is Orotate phosphoribosyltransferase (210 aa).

Lys-26 contacts 5-phospho-alpha-D-ribose 1-diphosphate. 34–35 (FF) serves as a coordination point for orotate. 5-phospho-alpha-D-ribose 1-diphosphate-binding positions include 72-73 (YK), Arg-98, Lys-99, Lys-102, His-104, and 123-131 (DDVITAGTA). Orotate contacts are provided by Thr-127 and Arg-155.

This sequence belongs to the purine/pyrimidine phosphoribosyltransferase family. PyrE subfamily. As to quaternary structure, homodimer. Requires Mg(2+) as cofactor.

The catalysed reaction is orotidine 5'-phosphate + diphosphate = orotate + 5-phospho-alpha-D-ribose 1-diphosphate. It participates in pyrimidine metabolism; UMP biosynthesis via de novo pathway; UMP from orotate: step 1/2. Functionally, catalyzes the transfer of a ribosyl phosphate group from 5-phosphoribose 1-diphosphate to orotate, leading to the formation of orotidine monophosphate (OMP). The sequence is that of Orotate phosphoribosyltransferase from Legionella pneumophila (strain Paris).